The primary structure comprises 1125 residues: MVQKVLSRQSDNSQDVSAEQLDVVESGSIDQQNIRAWVVRKVKENDKRTSTNQSFKWEAVKPASCLDAANEKFMYLHGGREKSGISNSLFKLDLDSCTVYSHNRGEDNDSPARVGHSIVCSADTIYLFGGCDSETDSTFEVGDNSLYAYNFKSNQWNLVSTQSPLPSPRTGHSMLLVDSKLWIFGGECQGKYLNDIHLFDTKGVDRRTQSELKQKANANNVEKANMEFDETDWSWETPFLHSSSPPPRSNHSVTLVQGKIFVHGGHNDTGPLSDLWLFDLETLSWTEVRSIGRFPGPREGHQATTIDDTVYIYGGRDNKGLILNELWAFNYSQQRWSLVSNPIPILLSDSSSYKIVSKNNHILLLYLNALDAPKQLLCYEADPKNLYWDKDKFSDIPVLQHISMKPSNASNHTVSLGYLNDRPNHSKKNSVTSTSSSQFNNFLEQNQKAVRSARHRHYASLDEQGLHSLRNLSKTSGMNHSADFSLHEFGQADPFAYEIEKPIASLPLPNGNDTISRSSESSSPINESESNSLLKLQSDFKFSNSDDRVAWLEEQLLYCMQQGYTLKPPNLFQHVDEKLRLEKKEQLSYLEILKVIEQMLESNEQKFKKQIVSLASENAKLAAQRDAAVENANYSRSLIQKKTTDETVGSLIEKVGKLEYEVQGTLEEATSYYQKNTELQQLLKQNESASELLKSRNEKLCVDYDKLRSVFEEDSSKILSLQKENENLQSQILQISEELVDYRSRCEALEYGNYELETKLIEMHDRVEMQTNVIEASASALDVSNTAILSFEDSLRRERDEKSTLQQKCLNLQYEYENVRIELENLQSRALELESALEQSVSDAKYSKAIMQSGLSKLLSSINENKDNLKEFSKSKQKISYLESQLEGLHELLRESQRLCEGRTKELLNSQQKLYDLKHSYSSVMTEKSKLSDQVNDLTEQAKITQRKLSEVQIALADSKMNQQLSGKDSTDVHLPTDFSASSSPLRSYFNEEDSFNNASAAHSSKESDIPSGGVFTKYRNHFGNLMTSEETKAPDNNDLHKRLSDVINSQQKFLSLSPQVSKDYYDVRSKLNDTAGSFSGEEMRAIDDNYYASRIKQLEDDYQKAITYANCSDESFQQLSHSFM.

5 Kelch repeats span residues Phe-73–Asp-123, Thr-124–Ser-179, Leu-181–Met-226, Lys-259–Asp-308, and Val-310–Asn-360. Residues Ser-430, Ser-437, Ser-460, Ser-523, Ser-980, Ser-982, Ser-983, Ser-984, Ser-1078, and Ser-1080 each carry the phosphoserine modification. The disordered stretch occupies residues Pro-507–Ser-530. The segment covering Ile-515–Ser-530 has biased composition (low complexity).

The protein localises to the cell tip. Functionally, acts as a cell end marker required for efficient new end take-off (NETO), whereby growth is activated at the cell end to generate bipolarity in extending cells. Also required for proper placement of the septum. The chain is Tip elongation aberrant protein 3 (tea3) from Schizosaccharomyces pombe (strain 972 / ATCC 24843) (Fission yeast).